The following is a 487-amino-acid chain: Argininosuccinate lyase (487 aa).

The protein belongs to the lyase 1 family. Argininosuccinate lyase subfamily.

The protein resides in the cytoplasm. It carries out the reaction 2-(N(omega)-L-arginino)succinate = fumarate + L-arginine. It participates in amino-acid biosynthesis; L-arginine biosynthesis; L-arginine from L-ornithine and carbamoyl phosphate: step 3/3. This chain is Argininosuccinate lyase, found in Methanococcus aeolicus (strain ATCC BAA-1280 / DSM 17508 / OCM 812 / Nankai-3).